A 471-amino-acid chain; its full sequence is Argininosuccinate lyase (471 aa).

The protein belongs to the lyase 1 family. Argininosuccinate lyase subfamily.

The protein resides in the cytoplasm. The enzyme catalyses 2-(N(omega)-L-arginino)succinate = fumarate + L-arginine. It participates in amino-acid biosynthesis; L-arginine biosynthesis; L-arginine from L-ornithine and carbamoyl phosphate: step 3/3. In Parasynechococcus marenigrum (strain WH8102), this protein is Argininosuccinate lyase.